The primary structure comprises 356 residues: Histidinol-phosphate aminotransferase (356 aa).

An N6-(pyridoxal phosphate)lysine modification is found at Lys214.

The protein belongs to the class-II pyridoxal-phosphate-dependent aminotransferase family. Histidinol-phosphate aminotransferase subfamily. As to quaternary structure, homodimer. Requires pyridoxal 5'-phosphate as cofactor.

The enzyme catalyses L-histidinol phosphate + 2-oxoglutarate = 3-(imidazol-4-yl)-2-oxopropyl phosphate + L-glutamate. It participates in amino-acid biosynthesis; L-histidine biosynthesis; L-histidine from 5-phospho-alpha-D-ribose 1-diphosphate: step 7/9. In Escherichia coli O8 (strain IAI1), this protein is Histidinol-phosphate aminotransferase.